A 253-amino-acid chain; its full sequence is 2-dehydro-3-deoxy-D-gluconate 5-dehydrogenase (253 aa).

Position 14–38 (14–38) interacts with NAD(+); that stretch reads VVTGCDTGLGQGMALGLAQAGCDIV. Substrate is bound at residue Ser-145. Tyr-158 functions as the Proton acceptor in the catalytic mechanism.

Belongs to the short-chain dehydrogenases/reductases (SDR) family. Homotetramer.

It carries out the reaction 2-dehydro-3-deoxy-D-gluconate + NAD(+) = 3-deoxy-D-glycero-2,5-hexodiulosonate + NADH + H(+). The enzyme catalyses 4-pregnen-20,21-diol-3-one + NAD(+) = 21-hydroxyprogesterone + NADH + H(+). Functionally, catalyzes the reversible reduction of 2,5-diketo-3-deoxygluconate (DKII or 4,6-dihydroxy-2,5-dioxohexanoate) into 2-keto-3-deoxygluconate (KDG or 2-dehydro-3-deoxygluconate) with a concomitant oxidation of NADH. To a lesser extent, can also reduce 5-keto-D-gluconate and oxidize D-gluconate and 1,2-propanediol. Together with KduI, seems to play a role in the catabolism of hexuronates under osmotic stress conditions, substituting for the regular hexuronate degrading enzymes UxaABC and UxuAB whose expression is repressed in these conditions. In vitro, also exhibits NADH-dependent 20-ketosteroid reductase activity against eukaryotic steroid hormone 11-deoxycorticosterone (11-DOC), which is converted into the product 4-pregnen-20,21-diol-3-one. In addition to 11-DOC, five other C21 steroid compounds (11-deoxycortisol, cortisol, corticosterone, cortisone, and 21-hydroxypregnenolone) are reduced by KduD, but steroids lacking the hydroxyl group at C21 position, such as pregnenolone, testosterone propionate, cortisone acetate, or progesterone, cannot be used as substrate. In Escherichia coli (strain K12), this protein is 2-dehydro-3-deoxy-D-gluconate 5-dehydrogenase.